The following is a 78-amino-acid chain: DNA-directed RNA polymerase subunit Rpo5 (78 aa).

It belongs to the archaeal Rpo5/eukaryotic RPB5 RNA polymerase subunit family. As to quaternary structure, part of the RNA polymerase complex.

It is found in the cytoplasm. It catalyses the reaction RNA(n) + a ribonucleoside 5'-triphosphate = RNA(n+1) + diphosphate. DNA-dependent RNA polymerase (RNAP) catalyzes the transcription of DNA into RNA using the four ribonucleoside triphosphates as substrates. The sequence is that of DNA-directed RNA polymerase subunit Rpo5 from Methanosarcina mazei (strain ATCC BAA-159 / DSM 3647 / Goe1 / Go1 / JCM 11833 / OCM 88) (Methanosarcina frisia).